The primary structure comprises 353 residues: Photosystem II protein D1 (353 aa).

Thr2 bears the N-acetylthreonine mark. Thr2 is subject to Phosphothreonine. Transmembrane regions (helical) follow at residues 29–46, 118–133, and 142–156; these read YIGW…TATS, HFLL…EWEL, and WIAV…AATA. Residue His118 coordinates chlorophyll a. Tyr126 lines the pheophytin a pocket. [CaMn4O5] cluster contacts are provided by Asp170 and Glu189. The helical transmembrane segment at 197–218 threads the bilayer; that stretch reads FHMLGVAGVFGGSLFSAMHGSL. His198 contributes to the chlorophyll a binding site. A quinone contacts are provided by residues His215 and 264 to 265; that span reads SF. A Fe cation-binding site is contributed by His215. Fe cation is bound at residue His272. A helical membrane pass occupies residues 274 to 288; it reads FLAAWPVIGIWFTAL. Positions 332, 333, 342, and 344 each coordinate [CaMn4O5] cluster. Positions 345–353 are excised as a propeptide; it reads AVEAPSTNG.

The protein belongs to the reaction center PufL/M/PsbA/D family. As to quaternary structure, PSII is composed of 1 copy each of membrane proteins PsbA, PsbB, PsbC, PsbD, PsbE, PsbF, PsbH, PsbI, PsbJ, PsbK, PsbL, PsbM, PsbT, PsbX, PsbY, PsbZ, Psb30/Ycf12, at least 3 peripheral proteins of the oxygen-evolving complex and a large number of cofactors. It forms dimeric complexes. Requires The D1/D2 heterodimer binds P680, chlorophylls that are the primary electron donor of PSII, and subsequent electron acceptors. It shares a non-heme iron and each subunit binds pheophytin, quinone, additional chlorophylls, carotenoids and lipids. D1 provides most of the ligands for the Mn4-Ca-O5 cluster of the oxygen-evolving complex (OEC). There is also a Cl(-1) ion associated with D1 and D2, which is required for oxygen evolution. The PSII complex binds additional chlorophylls, carotenoids and specific lipids. as cofactor. In terms of processing, tyr-161 forms a radical intermediate that is referred to as redox-active TyrZ, YZ or Y-Z. Post-translationally, C-terminally processed by CTPA; processing is essential to allow assembly of the oxygen-evolving complex and thus photosynthetic growth.

The protein resides in the plastid. It is found in the chloroplast thylakoid membrane. The enzyme catalyses 2 a plastoquinone + 4 hnu + 2 H2O = 2 a plastoquinol + O2. Its function is as follows. Photosystem II (PSII) is a light-driven water:plastoquinone oxidoreductase that uses light energy to abstract electrons from H(2)O, generating O(2) and a proton gradient subsequently used for ATP formation. It consists of a core antenna complex that captures photons, and an electron transfer chain that converts photonic excitation into a charge separation. The D1/D2 (PsbA/PsbD) reaction center heterodimer binds P680, the primary electron donor of PSII as well as several subsequent electron acceptors. The sequence is that of Photosystem II protein D1 from Buxus microphylla (Littleleaf boxwood).